The chain runs to 268 residues: Phosphatidylcholine synthase (268 aa).

Residues 1-27 (MAARKAAKKLTDRIPRPKKKVTWPQAR) are Cytoplasmic-facing. The chain crosses the membrane as a helical span at residues 28-48 (AFSVHLLTASGSFLAFLSLVA). The Periplasmic portion of the chain corresponds to 49-53 (ASEER). The helical transmembrane segment at 54–74 (WTAMFWWLGLALFVDGIDGPI) threads the bilayer. The Cytoplasmic segment spans residues 75-88 (ARKLEVKEILPTWS). Residues 89 to 109 (GELLDNIIDYVTYVLIPAFAL) form a helical membrane-spanning segment. Residues 110–112 (YQR) are Periplasmic-facing. The helical transmembrane segment at 113 to 133 (GFMGEGLSFLSAAIIVVSSAI) threads the bilayer. Topologically, residues 134–145 (YYADTGMKTKEN) are cytoplasmic. The helical transmembrane segment at 146-166 (FFKGFPVVWNMVVFTLFVIEP) threads the bilayer. Topologically, residues 167–168 (GQ) are periplasmic. The helical transmembrane segment at 169–189 (WVSFAVVVVAGILTFVPINFI) threads the bilayer. Over 190-203 (HPVRVVRLRPFNLT) the chain is Cytoplasmic. A helical membrane pass occupies residues 204–224 (MTLLWCAFGALALAQAALAAF). The Periplasmic portion of the chain corresponds to 225–240 (YDQIGVLGAQVSTFIK). Residues 241–261 (IGITITGLYLACIGGIMQFFP) traverse the membrane as a helical segment. At 262 to 268 (NLGAKKA) the chain is on the cytoplasmic side.

Belongs to the CDP-alcohol phosphatidyltransferase class-I family. It depends on Mn(2+) as a cofactor.

It is found in the cell inner membrane. The catalysed reaction is a CDP-1,2-diacyl-sn-glycerol + choline = a 1,2-diacyl-sn-glycero-3-phosphocholine + CMP + H(+). In terms of biological role, condenses choline with CDP-diglyceride to produce phosphatidylcholine and CMP. The sequence is that of Phosphatidylcholine synthase (pcs) from Mesorhizobium japonicum (strain LMG 29417 / CECT 9101 / MAFF 303099) (Mesorhizobium loti (strain MAFF 303099)).